The sequence spans 452 residues: Pup--protein ligase (452 aa).

E9 contributes to the Mg(2+) binding site. Position 53 (R53) interacts with ATP. A Mg(2+)-binding site is contributed by Y55. The Proton acceptor role is filled by D57. Mg(2+) is bound at residue E63. The ATP site is built by T66 and W419.

It belongs to the Pup ligase/Pup deamidase family. Pup-conjugating enzyme subfamily.

It carries out the reaction ATP + [prokaryotic ubiquitin-like protein]-L-glutamate + [protein]-L-lysine = ADP + phosphate + N(6)-([prokaryotic ubiquitin-like protein]-gamma-L-glutamyl)-[protein]-L-lysine.. The protein operates within protein degradation; proteasomal Pup-dependent pathway. Its pathway is protein modification; protein pupylation. Catalyzes the covalent attachment of the prokaryotic ubiquitin-like protein modifier Pup to the proteasomal substrate proteins, thereby targeting them for proteasomal degradation. This tagging system is termed pupylation. The ligation reaction involves the side-chain carboxylate of the C-terminal glutamate of Pup and the side-chain amino group of a substrate lysine. The protein is Pup--protein ligase of Mycobacterium sp. (strain JLS).